A 391-amino-acid polypeptide reads, in one-letter code: Nucleosome assembly protein 1-like 1 (391 aa).

The span at 1–10 (MADIDNKEQS) shows a compositional bias: basic and acidic residues. The disordered stretch occupies residues 1–32 (MADIDNKEQSELDQDLDDVEEVEEEETGEETK). A2 carries the N-acetylalanine modification. S10 is modified (phosphoserine). Positions 11-28 (ELDQDLDDVEEVEEEETG) are enriched in acidic residues. T62 and T64 each carry phosphothreonine. S69 is subject to Phosphoserine. K116 carries the post-translational modification N6-acetyllysine. The short motif at 125–150 (YEPTEEECEWKPDEEDEISEELKEKA) is the NAP1L motif element. The segment covering 132-143 (CEWKPDEEDEIS) has biased composition (acidic residues). Positions 132–163 (CEWKPDEEDEISEELKEKAKIEDEKKDEEKED) are disordered. The residue at position 143 (S143) is a Phosphoserine. Over residues 144-163 (EELKEKAKIEDEKKDEEKED) the composition is skewed to basic and acidic residues. The Nuclear localization signal motif lies at 273–279 (IKKKQKH). The segment covering 346-376 (AIEDDDDDYDEEGEEADEEGEEEGDEENDPD) has biased composition (acidic residues). Residues 346 to 391 (AIEDDDDDYDEEGEEADEEGEEEGDEENDPDYDPKKDQNPAECKQQ) form a disordered region. Residues E359 and E360 each carry the 5-glutamyl polyglycine modification. Over residues 377-391 (YDPKKDQNPAECKQQ) the composition is skewed to basic and acidic residues. C388 bears the Cysteine methyl ester mark. C388 carries S-farnesyl cysteine lipidation. The propeptide at 389-391 (KQQ) is removed in mature form.

Belongs to the nucleosome assembly protein (NAP) family. In terms of assembly, homodimer. The dimer binds strongly and sequentially to single and double H2A-H2B heterodimers. Interacts with ERCC6; this interaction increases ERCC6 processivity. Interacts with RAD54. Interacts with SETD1A. Polyglycylated by TTLL10 on glutamate residues, resulting in polyglycine chains on the gamma-carboxyl group. Both polyglutamylation and polyglycylation modifications can coexist on the same protein on adjacent residues, and lowering polyglycylation levels increases polyglutamylation, and reciprocally. Post-translationally, polyglutamylated by TTLL4 on glutamate residues, resulting in polyglutamate chains on the gamma-carboxyl group. Both polyglutamylation and polyglycylation modifications can coexist on the same protein on adjacent residues, and lowering polyglycylation levels increases polyglutamylation, and reciprocally.

It localises to the nucleus. It is found in the melanosome. Its subcellular location is the cytoplasm. Its function is as follows. Histone chaperone that plays a role in the nuclear import of H2A-H2B and nucleosome assembly. Also participates in several important DNA repair mechanisms: greatly enhances ERCC6-mediated chromatin remodeling which is essential for transcription-coupled nucleotide excision DNA repair. Also stimulates homologous recombination (HR) by RAD51 and RAD54 which is essential in mitotic DNA double strand break (DSB) repair. Plays a key role in the regulation of embryonic neurogenesis. Promotes the proliferation of neural progenitors and inhibits neuronal differentiation during cortical development. Regulates neurogenesis via the modulation of RASSF10; regulates RASSF10 expression by promoting SETD1A-mediated H3K4 methylation at the RASSF10 promoter. This is Nucleosome assembly protein 1-like 1 (NAP1L1) from Pongo abelii (Sumatran orangutan).